Here is a 427-residue protein sequence, read N- to C-terminus: 3-isopropylmalate dehydratase large subunit (427 aa).

Cys308, Cys368, and Cys371 together coordinate [4Fe-4S] cluster.

Belongs to the aconitase/IPM isomerase family. LeuC type 2 subfamily. Heterodimer of LeuC and LeuD. [4Fe-4S] cluster is required as a cofactor.

It carries out the reaction (2R,3S)-3-isopropylmalate = (2S)-2-isopropylmalate. The protein operates within amino-acid biosynthesis; L-leucine biosynthesis; L-leucine from 3-methyl-2-oxobutanoate: step 2/4. In terms of biological role, catalyzes the isomerization between 2-isopropylmalate and 3-isopropylmalate, via the formation of 2-isopropylmaleate. The sequence is that of 3-isopropylmalate dehydratase large subunit from Geotalea uraniireducens (strain Rf4) (Geobacter uraniireducens).